The sequence spans 83 residues: Cell division topological specificity factor (83 aa).

Belongs to the MinE family.

Prevents the cell division inhibition by proteins MinC and MinD at internal division sites while permitting inhibition at polar sites. This ensures cell division at the proper site by restricting the formation of a division septum at the midpoint of the long axis of the cell. This is Cell division topological specificity factor from Alcanivorax borkumensis (strain ATCC 700651 / DSM 11573 / NCIMB 13689 / SK2).